A 163-amino-acid polypeptide reads, in one-letter code: Halocyanin (163 aa).

An N-terminal signal peptide occupies residues 1–24; it reads MKDISRRRFVLGTGATVAAATLAG. Cys25 is modified (N-acetylcysteine). The S-archaeol cysteine moiety is linked to residue Cys25. The span at 26–38 shows a compositional bias: gly residues; that stretch reads NGNGNGNGNGNGN. Residues 26-48 are disordered; sequence NGNGNGNGNGNGNGEPDTPEGRA. The 116-residue stretch at 48–163 folds into the Plastocyanin-like domain; the sequence is ADQFLTDNDA…QGMYGAVIVE (116 aa). Cu cation contacts are provided by His110, Cys148, His151, and Met156.

It is found in the cell membrane. Electron donor. Binds one copper ion. The sequence is that of Halocyanin (hcy) from Natronomonas pharaonis (Natronobacterium pharaonis).